Reading from the N-terminus, the 68-residue chain is Conotoxin Cal12.1p3 (68 aa).

A propeptide spanning residues 1–21 (DLITNSYTRGKPRHVTSWPKL) is cleaved from the precursor.

Contains 4 disulfide bonds. Expressed by the venom duct.

The protein resides in the secreted. In Californiconus californicus (California cone), this protein is Conotoxin Cal12.1p3.